The sequence spans 162 residues: UPF0262 protein AZC_3148 (162 aa).

The protein belongs to the UPF0262 family.

The polypeptide is UPF0262 protein AZC_3148 (Azorhizobium caulinodans (strain ATCC 43989 / DSM 5975 / JCM 20966 / LMG 6465 / NBRC 14845 / NCIMB 13405 / ORS 571)).